The sequence spans 233 residues: DNA repair protein RecO (233 aa).

Belongs to the RecO family.

In terms of biological role, involved in DNA repair and RecF pathway recombination. This chain is DNA repair protein RecO, found in Pseudomonas aeruginosa (strain UCBPP-PA14).